Consider the following 538-residue polypeptide: CTP synthase (538 aa).

The interval 1 to 266 is amidoligase domain; that stretch reads MRTKYIFITG…DQKIVDLLNI (266 aa). Serine 14 is a binding site for CTP. Serine 14 is a binding site for UTP. Residues 15-20 and aspartate 72 contribute to the ATP site; that span reads SLGKGL. Mg(2+) contacts are provided by aspartate 72 and glutamate 140. Residues 147–149, 187–192, and lysine 223 contribute to the CTP site; these read DIE and KTKPTQ. UTP-binding positions include 187-192 and lysine 223; that span reads KTKPTQ. 239 to 241 provides a ligand contact to ATP; that stretch reads KDV. The Glutamine amidotransferase type-1 domain occupies 291-533; sequence NIAIVGKYVN…IEAALRYRKK (243 aa). Glycine 353 contacts L-glutamine. Cysteine 380 (nucleophile; for glutamine hydrolysis) is an active-site residue. Residues 381–384, glutamate 404, and arginine 461 each bind L-glutamine; that span reads LGMQ. Catalysis depends on residues histidine 506 and glutamate 508.

The protein belongs to the CTP synthase family. Homotetramer.

It carries out the reaction UTP + L-glutamine + ATP + H2O = CTP + L-glutamate + ADP + phosphate + 2 H(+). It catalyses the reaction L-glutamine + H2O = L-glutamate + NH4(+). The enzyme catalyses UTP + NH4(+) + ATP = CTP + ADP + phosphate + 2 H(+). It participates in pyrimidine metabolism; CTP biosynthesis via de novo pathway; CTP from UDP: step 2/2. Allosterically activated by GTP, when glutamine is the substrate; GTP has no effect on the reaction when ammonia is the substrate. The allosteric effector GTP functions by stabilizing the protein conformation that binds the tetrahedral intermediate(s) formed during glutamine hydrolysis. Inhibited by the product CTP, via allosteric rather than competitive inhibition. Catalyzes the ATP-dependent amination of UTP to CTP with either L-glutamine or ammonia as the source of nitrogen. Regulates intracellular CTP levels through interactions with the four ribonucleotide triphosphates. This Syntrophus aciditrophicus (strain SB) protein is CTP synthase.